A 320-amino-acid polypeptide reads, in one-letter code: Methionyl-tRNA formyltransferase (320 aa).

111 to 114 (SLLP) is a binding site for (6S)-5,6,7,8-tetrahydrofolate.

This sequence belongs to the Fmt family.

It catalyses the reaction L-methionyl-tRNA(fMet) + (6R)-10-formyltetrahydrofolate = N-formyl-L-methionyl-tRNA(fMet) + (6S)-5,6,7,8-tetrahydrofolate + H(+). Its function is as follows. Attaches a formyl group to the free amino group of methionyl-tRNA(fMet). The formyl group appears to play a dual role in the initiator identity of N-formylmethionyl-tRNA by promoting its recognition by IF2 and preventing the misappropriation of this tRNA by the elongation apparatus. This chain is Methionyl-tRNA formyltransferase, found in Pediococcus pentosaceus (strain ATCC 25745 / CCUG 21536 / LMG 10740 / 183-1w).